The sequence spans 161 residues: Transcription elongation factor GreA (161 aa).

Positions 43 to 68 (SENAEYEAAREKQAFVEARIKHLEDI) form a coiled coil.

Belongs to the GreA/GreB family.

Its function is as follows. Necessary for efficient RNA polymerase transcription elongation past template-encoded arresting sites. The arresting sites in DNA have the property of trapping a certain fraction of elongating RNA polymerases that pass through, resulting in locked ternary complexes. Cleavage of the nascent transcript by cleavage factors such as GreA or GreB allows the resumption of elongation from the new 3'terminus. GreA releases sequences of 2 to 3 nucleotides. The protein is Transcription elongation factor GreA of Rickettsia bellii (strain OSU 85-389).